Consider the following 412-residue polypeptide: Putative competence-damage inducible protein (412 aa).

It belongs to the CinA family.

This Bacillus cereus (strain ATCC 14579 / DSM 31 / CCUG 7414 / JCM 2152 / NBRC 15305 / NCIMB 9373 / NCTC 2599 / NRRL B-3711) protein is Putative competence-damage inducible protein.